The following is a 273-amino-acid chain: SUMO-1 cysteine protease S273R (273 aa).

Active-site residues include H168 and N187. Q226 is a binding site for substrate. Residue C232 is the Nucleophile of the active site.

This sequence belongs to the peptidase C63 family.

Its subcellular location is the host cytoplasm. It is found in the virion. In terms of biological role, cysteine protease that plays several role during infection including processing of the structural polyprotein or inhibition of the host immune response. Catalyzes the maturation of the pp220 and pp62 polyprotein precursors into core-shell proteins. Plays a role in the disruption of host pyroptosis via specific cleavage of gasdermin D/GSDMD. In addition, strongly decreases the host cGAS-STING signaling by targeting IKBKE via its enzymatic activity. Also impairs host FOXJ1-mediated antiviral effect via degradation of FOXJ1. The chain is SUMO-1 cysteine protease S273R from Ornithodoros (relapsing fever ticks).